The following is a 194-amino-acid chain: Dephospho-CoA kinase (194 aa).

One can recognise a DPCK domain in the interval 3 to 194 (TIGLTGGIGS…EQVDGFWGGL (192 aa)). 11–16 (GSGKST) serves as a coordination point for ATP.

Belongs to the CoaE family.

It is found in the cytoplasm. The catalysed reaction is 3'-dephospho-CoA + ATP = ADP + CoA + H(+). It functions in the pathway cofactor biosynthesis; coenzyme A biosynthesis; CoA from (R)-pantothenate: step 5/5. Functionally, catalyzes the phosphorylation of the 3'-hydroxyl group of dephosphocoenzyme A to form coenzyme A. The sequence is that of Dephospho-CoA kinase from Corynebacterium jeikeium (strain K411).